Here is a 304-residue protein sequence, read N- to C-terminus: Polyisoprenyl-teichoic acid--peptidoglycan teichoic acid transferase TagU (304 aa).

Topologically, residues 1–4 (MKKK) are cytoplasmic. Residues 5–25 (ILFWILGIIGILIIGGGAYAY) form a helical; Signal-anchor for type II membrane protein membrane-spanning segment. At 26-304 (SIYSSVSKTL…KLRAHLEVTK (279 aa)) the chain is on the extracellular side.

This sequence belongs to the LytR/CpsA/Psr (LCP) family.

The protein localises to the cell membrane. It participates in cell wall biogenesis. Its function is as follows. May catalyze the final step in cell wall teichoic acid biosynthesis, the transfer of the anionic cell wall polymers (APs) from their lipid-linked precursor to the cell wall peptidoglycan (PG). The sequence is that of Polyisoprenyl-teichoic acid--peptidoglycan teichoic acid transferase TagU from Bacillus cereus (strain ATCC 14579 / DSM 31 / CCUG 7414 / JCM 2152 / NBRC 15305 / NCIMB 9373 / NCTC 2599 / NRRL B-3711).